The sequence spans 511 residues: Maturase K (511 aa).

This sequence belongs to the intron maturase 2 family. MatK subfamily.

The protein localises to the plastid. It is found in the chloroplast. Its function is as follows. Usually encoded in the trnK tRNA gene intron. Probably assists in splicing its own and other chloroplast group II introns. The protein is Maturase K of Adesmia lanata.